Reading from the N-terminus, the 1095-residue chain is Actin cross-linking toxin VgrG1 (1095 aa).

Positions 712–1095 (TPDFPTHFPK…TVIQQVESLV (384 aa)) constitute an ACD domain. Residue 723-727 (SIGIE) coordinates ATP. Glu-727 and Glu-789 together coordinate Mg(2+). Ser-792 contacts ATP. Gln-873 is a binding site for Mg(2+). Arg-979 provides a ligand contact to ATP. Glu-1050 lines the Mg(2+) pocket.

It belongs to the VgrG protein family. In terms of assembly, interacts with protein VC1417. Mg(2+) serves as cofactor.

It localises to the secreted. The protein localises to the host cytoplasm. Its subcellular location is the host cytosol. Functionally, part of the type VI secretion system (T6SS) specialized secretion system, which delivers several virulence factors in both prokaryotic and eukaryotic cells during infection. Forms the spike at the tip of the elongating tube probably formed by hemolysin co-regulated protein/Hcp. Allows the delivery of the TseL antibacterial toxin to target cells where it exerts its toxicity. Also acts directly as an actin-directed toxin that catalyzes the covalent cross-linking of host cytoplasmic monomeric actin. Mediates the cross-link between 'Lys-50' of one monomer and 'Glu-270' of another actin monomer, resulting in formation of highly toxic actin oligomers that cause cell rounding. The toxin can be highly efficient at very low concentrations by acting on formin homology family proteins: toxic actin oligomers bind with high affinity to formins and adversely affect both nucleation and elongation abilities of formins, causing their potent inhibition in both profilin-dependent and independent manners. Acts as an acid--amino-acid ligase that transfers the gamma-phosphoryl group of ATP to the 'Glu-270' actin residue, resulting in the formation of an activated acyl phosphate intermediate. This intermediate is further hydrolyzed and the energy of hydrolysis is utilized for the formation of the amide bond between actin subunits. This is Actin cross-linking toxin VgrG1 from Vibrio cholerae serotype O1 (strain ATCC 39541 / Classical Ogawa 395 / O395).